A 289-amino-acid chain; its full sequence is NADPH-dependent 7-cyano-7-deazaguanine reductase (289 aa).

Residue 81–83 (IES) participates in substrate binding. 83–84 (SK) lines the NADPH pocket. Catalysis depends on Cys-196, which acts as the Thioimide intermediate. Catalysis depends on Asp-203, which acts as the Proton donor. Position 235–236 (235–236 (HE)) interacts with substrate. 264–265 (RG) lines the NADPH pocket.

It belongs to the GTP cyclohydrolase I family. QueF type 2 subfamily. In terms of assembly, homodimer.

The protein resides in the cytoplasm. It carries out the reaction 7-aminomethyl-7-carbaguanine + 2 NADP(+) = 7-cyano-7-deazaguanine + 2 NADPH + 3 H(+). Its pathway is tRNA modification; tRNA-queuosine biosynthesis. Functionally, catalyzes the NADPH-dependent reduction of 7-cyano-7-deazaguanine (preQ0) to 7-aminomethyl-7-deazaguanine (preQ1). The polypeptide is NADPH-dependent 7-cyano-7-deazaguanine reductase (Albidiferax ferrireducens (strain ATCC BAA-621 / DSM 15236 / T118) (Rhodoferax ferrireducens)).